We begin with the raw amino-acid sequence, 211 residues long: Shikimate kinase (211 aa).

Residues 1 to 23 form a disordered region; sequence MNASANLCAASDNDPQPGDQEAA. 50–55 lines the ATP pocket; that stretch reads GAGKTT. Thr54 serves as a coordination point for Mg(2+). Asp72, Arg96, and Gly118 together coordinate substrate. Arg156 is an ATP binding site. Position 175 (Arg175) interacts with substrate.

It belongs to the shikimate kinase family. In terms of assembly, monomer. Mg(2+) serves as cofactor.

The protein localises to the cytoplasm. It catalyses the reaction shikimate + ATP = 3-phosphoshikimate + ADP + H(+). It participates in metabolic intermediate biosynthesis; chorismate biosynthesis; chorismate from D-erythrose 4-phosphate and phosphoenolpyruvate: step 5/7. Its function is as follows. Catalyzes the specific phosphorylation of the 3-hydroxyl group of shikimic acid using ATP as a cosubstrate. This chain is Shikimate kinase, found in Bordetella bronchiseptica (strain ATCC BAA-588 / NCTC 13252 / RB50) (Alcaligenes bronchisepticus).